The chain runs to 342 residues: (+)-pulegone reductase (342 aa).

NADP(+)-binding positions include glycine 163–glycine 166, lysine 189, tyrosine 205, asparagine 229, cysteine 251–tyrosine 257, phenylalanine 281–valine 283, and asparagine 331.

The protein belongs to the NADP-dependent oxidoreductase L4BD family.

The protein resides in the cytoplasm. It carries out the reaction (2R,5R)-isomenthone + NADP(+) = (R)-pulegone + NADPH + H(+). It catalyses the reaction (1R,4S)-menthone + NADP(+) = (R)-pulegone + NADPH + H(+). Its pathway is secondary metabolite biosynthesis; terpenoid biosynthesis. With respect to regulation, not inhibited by (+)-menthofuran. Functionally, monoterpene synthase that catalyzes the specific reduction of the 4,8-double bond of (+)-pulegone to produce both (-)-menthone and (+)-isomenthone in a 70:30 ratio. Unable to utilize either (-)-isopiperitenone or (+)-cis-isopulegone, or to catalyze the reverse reaction with (-)-menthone or (+)-isomenthone. Has an absolute requirement for NADPH. The sequence is that of (+)-pulegone reductase from Mentha piperita (Peppermint).